Reading from the N-terminus, the 242-residue chain is MTYLLIDNSNTRTKFVLSSPEALLPERYMVPTREVSGERLDEVLAGVRYDAAVVCSVVPRVAEELKNWIVKPCHFLSCDSRLGVGIDYPHPRQIGADRLANAVGAAAYYGYPCVVVDFGTAVTFDVIGPQCTYMGGVIAPGLASMGDYLERNTALLPAIDPQEPSRVIGTSTVEAMQSGAVYGYRGLVKEILARLEGELGVRPAVVATGGDAALIARGVERIDHVDPDITLNGLRIAAGLNL.

7 to 14 contacts ATP; that stretch reads DNSNTRTK. Substrate contacts are provided by residues Tyr-88 and 95 to 98; that span reads GADR. Asp-97 acts as the Proton acceptor in catalysis. Residue Asp-117 coordinates K(+). Position 120 (Thr-120) interacts with ATP. Residue Thr-172 participates in substrate binding.

It belongs to the type III pantothenate kinase family. Homodimer. Requires NH4(+) as cofactor. It depends on K(+) as a cofactor.

Its subcellular location is the cytoplasm. The enzyme catalyses (R)-pantothenate + ATP = (R)-4'-phosphopantothenate + ADP + H(+). The protein operates within cofactor biosynthesis; coenzyme A biosynthesis; CoA from (R)-pantothenate: step 1/5. Catalyzes the phosphorylation of pantothenate (Pan), the first step in CoA biosynthesis. The protein is Type III pantothenate kinase of Akkermansia muciniphila (strain ATCC BAA-835 / DSM 22959 / JCM 33894 / BCRC 81048 / CCUG 64013 / CIP 107961 / Muc).